The chain runs to 116 residues: uncharacterized protein (116 aa).

Disordered regions lie at residues 1–26 and 74–116; these read MLLTPAKTTRTEDSANSTDDSSKSSN and ENDL…KSSI. Over residues 14–26 the composition is skewed to low complexity; that stretch reads SANSTDDSSKSSN. The span at 74–86 shows a compositional bias: basic and acidic residues; it reads ENDLKRSKSQGRE. The span at 104-116 shows a compositional bias: polar residues; that stretch reads NTASEIQRTKSSI.

This is an uncharacterized protein from Saccharomyces cerevisiae (strain ATCC 204508 / S288c) (Baker's yeast).